A 212-amino-acid polypeptide reads, in one-letter code: Pyridoxine/pyridoxamine 5'-phosphate oxidase (212 aa).

Residues 8–11 (RTNY) and Lys-66 contribute to the substrate site. Residues 61–66 (RIVLLK), 76–77 (FT), Lys-83, and Gln-105 each bind FMN. Substrate-binding residues include Tyr-123, Arg-127, and Ser-131. Residues 140–141 (QS) and Trp-185 contribute to the FMN site. Residue 191-193 (RLH) coordinates substrate. An FMN-binding site is contributed by Arg-195.

It belongs to the pyridoxamine 5'-phosphate oxidase family. In terms of assembly, homodimer. Requires FMN as cofactor.

It carries out the reaction pyridoxamine 5'-phosphate + O2 + H2O = pyridoxal 5'-phosphate + H2O2 + NH4(+). The enzyme catalyses pyridoxine 5'-phosphate + O2 = pyridoxal 5'-phosphate + H2O2. Its pathway is cofactor metabolism; pyridoxal 5'-phosphate salvage; pyridoxal 5'-phosphate from pyridoxamine 5'-phosphate: step 1/1. It functions in the pathway cofactor metabolism; pyridoxal 5'-phosphate salvage; pyridoxal 5'-phosphate from pyridoxine 5'-phosphate: step 1/1. In terms of biological role, catalyzes the oxidation of either pyridoxine 5'-phosphate (PNP) or pyridoxamine 5'-phosphate (PMP) into pyridoxal 5'-phosphate (PLP). The chain is Pyridoxine/pyridoxamine 5'-phosphate oxidase from Leptospira biflexa serovar Patoc (strain Patoc 1 / Ames).